The following is a 591-amino-acid chain: L-fucose isomerase (591 aa).

Active-site proton acceptor residues include E337 and D361. Residues E337, D361, and H528 each contribute to the Mn(2+) site.

This sequence belongs to the L-fucose isomerase family. Homohexamer. Requires Mn(2+) as cofactor.

It localises to the cytoplasm. It catalyses the reaction L-fucose = L-fuculose. Its pathway is carbohydrate degradation; L-fucose degradation; L-lactaldehyde and glycerone phosphate from L-fucose: step 1/3. Converts the aldose L-fucose into the corresponding ketose L-fuculose. The chain is L-fucose isomerase from Citrobacter koseri (strain ATCC BAA-895 / CDC 4225-83 / SGSC4696).